The following is a 165-amino-acid chain: Histone H1-like protein HC2 (165 aa).

Composition is skewed to basic residues over residues 1–50 (MLGV…KTVA) and 59–80 (PVAKKATAKKAPVRKVAAKKTV). A disordered region spans residues 1 to 80 (MLGVQKKRST…VRKVAAKKTV (80 aa)).

The protein belongs to the histone H1/H5 family. HCT subfamily.

In terms of biological role, might have a role in establishing the nucleoid structure of elementary bodies. This chain is Histone H1-like protein HC2 (hctB), found in Chlamydia trachomatis.